The following is a 396-amino-acid chain: Putative cytochrome P450 YjiB (396 aa).

Heme is bound at residue Cys349.

The protein belongs to the cytochrome P450 family. The cofactor is heme.

This Bacillus subtilis (strain 168) protein is Putative cytochrome P450 YjiB (yjiB).